The sequence spans 581 residues: mRNA-decapping enzyme 1B (581 aa).

A Phosphoserine modification is found at serine 145. Disordered regions lie at residues 181–222 (QISS…PEPQ) and 236–258 (APCQ…PEKF). Residues 204 to 219 (GSRQQRGPRPGQTSDP) show a composition bias toward polar residues. Residues 244–255 (PPQTLPLQQQQP) show a composition bias toward low complexity. Serine 269 and serine 326 each carry phosphoserine. Residues 349–411 (AENRCEPGAP…HQPVTGPGEV (63 aa)) are disordered. The segment covering 355-367 (PGAPAPASSATTP) has biased composition (low complexity). Threonine 366 bears the Phosphothreonine mark. The segment covering 368 to 381 (VSLAQPTRLSSALP) has biased composition (polar residues). The span at 382–401 (PQTPGPRALPRPAPPGPGPG) shows a compositional bias: pro residues. At serine 412 the chain carries Phosphoserine. The disordered stretch occupies residues 427–468 (QQLPAPGRPALAAKFPTATLSTRARNPLEPWRDPPPSTEQPA). A Phosphoserine modification is found at serine 475. The tract at residues 498–522 (SWAPPQERSRAPLPPGNQDPAATPT) is disordered.

The protein belongs to the DCP1 family. As to quaternary structure, interacts with DCP1A.

It localises to the cytoplasm. The protein resides in the nucleus. It catalyses the reaction a 5'-end (N(7)-methyl 5'-triphosphoguanosine)-ribonucleoside in mRNA + H2O = N(7)-methyl-GDP + a 5'-end phospho-ribonucleoside in mRNA + 2 H(+). May play a role in the degradation of mRNAs, both in normal mRNA turnover and in nonsense-mediated mRNA decay. May remove the 7-methyl guanine cap structure from mRNA molecules, yielding a 5'-phosphorylated mRNA fragment and 7m-GDP. This Bos taurus (Bovine) protein is mRNA-decapping enzyme 1B (DCP1B).